Here is a 419-residue protein sequence, read N- to C-terminus: Dual specificity protein phosphatase 7 (419 aa).

Residues M1 to T47 are disordered. Low complexity predominate over residues A10–S29. Over residues P31 to T47 the composition is skewed to gly residues. The Rhodanese domain maps to G68 to E187. The tract at residues C216–S240 is disordered. Residues S227–S240 show a composition bias toward polar residues. A Tyrosine-protein phosphatase domain is found at F244 to L387. The active-site Phosphocysteine intermediate is the C331. C331–R337 is a binding site for substrate.

The protein belongs to the protein-tyrosine phosphatase family. Non-receptor class dual specificity subfamily. In terms of assembly, interacts with MAPK1/ERK2; the interaction enhances DUSP7 phosphatase activity. Strongly expressed in liver. Expressed at significantly higher levels in malignant hematopoietic cells than in corresponding non-malignant cells.

The protein localises to the cytoplasm. The catalysed reaction is O-phospho-L-tyrosyl-[protein] + H2O = L-tyrosyl-[protein] + phosphate. It carries out the reaction O-phospho-L-seryl-[protein] + H2O = L-seryl-[protein] + phosphate. The enzyme catalyses O-phospho-L-threonyl-[protein] + H2O = L-threonyl-[protein] + phosphate. Strongly inhibited by sodium orthovanadate. In terms of biological role, dual specificity protein phosphatase. Shows high activity towards MAPK1/ERK2. Also has lower activity towards MAPK14 and MAPK8. In arrested oocytes, plays a role in meiotic resumption. Promotes nuclear envelope breakdown and activation of the CDK1/Cyclin-B complex in oocytes, probably by dephosphorylating and inactivating the conventional protein kinase C (cPKC) isozyme PRKCB. May also inactivate PRKCA and/or PRKCG. Also important in oocytes for normal chromosome alignment on the metaphase plate and progression to anaphase, where it might regulate activity of the spindle-assembly checkpoint (SAC) complex. This is Dual specificity protein phosphatase 7 from Homo sapiens (Human).